The following is a 389-amino-acid chain: Transaldolase (389 aa).

Residue Lys-136 is the Schiff-base intermediate with substrate of the active site. EF-hand domains lie at 330-365 (ALNQ…FDAI) and 365-388 (IDLN…VSKL). Ca(2+) is bound by residues Asp-343, Asp-345, Asp-347, Glu-354, Asp-366, Asn-368, Asp-370, Lys-372, and Glu-377.

Belongs to the transaldolase family. Type 1 subfamily.

It is found in the cytoplasm. It catalyses the reaction D-sedoheptulose 7-phosphate + D-glyceraldehyde 3-phosphate = D-erythrose 4-phosphate + beta-D-fructose 6-phosphate. The protein operates within carbohydrate degradation; pentose phosphate pathway; D-glyceraldehyde 3-phosphate and beta-D-fructose 6-phosphate from D-ribose 5-phosphate and D-xylulose 5-phosphate (non-oxidative stage): step 2/3. Its function is as follows. Transaldolase is important for the balance of metabolites in the pentose-phosphate pathway. The sequence is that of Transaldolase from Gloeobacter violaceus (strain ATCC 29082 / PCC 7421).